Consider the following 158-residue polypeptide: 2-C-methyl-D-erythritol 2,4-cyclodiphosphate synthase (158 aa).

Residues aspartate 8 and histidine 10 each coordinate a divalent metal cation. 4-CDP-2-C-methyl-D-erythritol 2-phosphate-binding positions include 8-10 (DVH) and 34-35 (HS). An a divalent metal cation-binding site is contributed by histidine 42. Residues 56–58 (DIG), 132–135 (TTNE), and arginine 142 contribute to the 4-CDP-2-C-methyl-D-erythritol 2-phosphate site.

It belongs to the IspF family. As to quaternary structure, homotrimer. The cofactor is a divalent metal cation.

It catalyses the reaction 4-CDP-2-C-methyl-D-erythritol 2-phosphate = 2-C-methyl-D-erythritol 2,4-cyclic diphosphate + CMP. It participates in isoprenoid biosynthesis; isopentenyl diphosphate biosynthesis via DXP pathway; isopentenyl diphosphate from 1-deoxy-D-xylulose 5-phosphate: step 4/6. Involved in the biosynthesis of isopentenyl diphosphate (IPP) and dimethylallyl diphosphate (DMAPP), two major building blocks of isoprenoid compounds. Catalyzes the conversion of 4-diphosphocytidyl-2-C-methyl-D-erythritol 2-phosphate (CDP-ME2P) to 2-C-methyl-D-erythritol 2,4-cyclodiphosphate (ME-CPP) with a corresponding release of cytidine 5-monophosphate (CMP). The sequence is that of 2-C-methyl-D-erythritol 2,4-cyclodiphosphate synthase from Chlorobium phaeobacteroides (strain DSM 266 / SMG 266 / 2430).